The sequence spans 443 residues: Thymidine phosphorylase (443 aa).

This sequence belongs to the thymidine/pyrimidine-nucleoside phosphorylase family. As to quaternary structure, homodimer.

It catalyses the reaction thymidine + phosphate = 2-deoxy-alpha-D-ribose 1-phosphate + thymine. It participates in pyrimidine metabolism; dTMP biosynthesis via salvage pathway; dTMP from thymine: step 1/2. In terms of biological role, the enzymes which catalyze the reversible phosphorolysis of pyrimidine nucleosides are involved in the degradation of these compounds and in their utilization as carbon and energy sources, or in the rescue of pyrimidine bases for nucleotide synthesis. The sequence is that of Thymidine phosphorylase from Shewanella loihica (strain ATCC BAA-1088 / PV-4).